Here is a 352-residue protein sequence, read N- to C-terminus: Maleylacetate reductase (352 aa).

It belongs to the iron-containing alcohol dehydrogenase family.

The enzyme catalyses 3-oxoadipate + NAD(+) = maleylacetate + NADH + H(+). The catalysed reaction is 3-oxoadipate + NADP(+) = maleylacetate + NADPH + H(+). It participates in aromatic compound metabolism; 3-chlorocatechol degradation. In Pseudomonas aeruginosa, this protein is Maleylacetate reductase (clcE).